A 304-amino-acid chain; its full sequence is Thyroxine 5-deiodinase (304 aa).

The disordered stretch occupies residues 1-22; sequence MPRQAASRLVVGEGEGPPGASG. Topologically, residues 1–44 are cytoplasmic; that stretch reads MPRQAASRLVVGEGEGPPGASGPAATMLRSLLLHSLRLCAQTAS. A helical; Signal-anchor for type II membrane protein transmembrane segment spans residues 45–67; the sequence is CLVLFPRFLGTAFMLWLLDFLCI. Residues 68 to 304 are Extracellular-facing; sequence RKHFLRRRHP…QLHGTRPHRF (237 aa). Sec170 is a catalytic residue. Position 170 (Sec170) is a non-standard amino acid, selenocysteine.

It belongs to the iodothyronine deiodinase family. As to quaternary structure, monomer. Homodimer. May undergo minor heretodimerization with DIO1 and DIO2.

The protein localises to the cell membrane. It is found in the endosome membrane. The enzyme catalyses 3,3',5'-triiodo-L-thyronine + iodide + A + H(+) = L-thyroxine + AH2. It carries out the reaction 3,3'-diiodo-L-thyronine + iodide + A + H(+) = 3,3',5-triiodo-L-thyronine + AH2. It catalyses the reaction 3-iodo-L-thyronine + iodide + A + H(+) = 3,5-diiodo-L-thyronine + AH2. The catalysed reaction is L-thyronine + iodide + A + H(+) = 3-iodo-L-thyronine + AH2. The enzyme catalyses 3',5'-diiodo-L-thyronine + iodide + A + H(+) = 3,3',5'-triiodo-L-thyronine + AH2. It carries out the reaction 3'-iodo-L-thyronine + iodide + A + H(+) = 3,3'-diiodo-L-thyronine + AH2. It catalyses the reaction 3,3',5'-triiodothyronamine + iodide + A + H(+) = 3,3',5,5'-tetraiodothyronamine + AH2. The catalysed reaction is 3',5'-diiodothyronamine + iodide + A + H(+) = 3,3',5'-triiodothyronamine + AH2. The enzyme catalyses 3,3'-diiodothyronamine + iodide + A + H(+) = 3,3',5-triiodothyronamine + AH2. It carries out the reaction 3-iodothyronamine + iodide + A + H(+) = 3,5-diiodothyronamine + AH2. It catalyses the reaction 3'-iodothyronamine + iodide + A + H(+) = 3,3'-diiodothyronamine + AH2. The catalysed reaction is thyronamine + iodide + A + H(+) = 3-iodothyronamine + AH2. Functionally, plays a crucial role in the metabolism of thyroid hormones (TH) and has specific roles in TH activation and inactivation by deiodination. Catalyzes the deiodination of L-thyroxine (T4) to 3,3',5'-triiodothyronine (rT3), 3,5,3'-triiodothyronine (T3) to 3,3'-diiodothyronine (3,3'-T2), 3,5-diiodothyronine (3,5-T2) to 3-monoiodothyronine (3-T1), rT3 to 3',5'-diiodothyronine (3',5'-T2) and 3,3'-T2 to 3'-monoiodothyronine (3'-T1) via inner-ring deiodination (IRD). Catalyzes the deiodination of 3-T1 to L-thyronine (T0) via outer-ring deiodination (ORD). Catalyzes the tyrosyl ring deiodinations of 3,3',5,5'-tetraiodothyronamine, 3,3',5'-triiodothyronamine, 3,5,3'-triiodothyronamine, 3,5-diiodothyronamine, 3,3'-diiodothyronamine and 3-iodothyronamine. The protein is Thyroxine 5-deiodinase (Dio3) of Mus musculus (Mouse).